The chain runs to 366 residues: Elongation factor Ts, mitochondrial (366 aa).

The transit peptide at 1 to 50 (MAWSQSARKPMIGLLFRAQQHSARGYSYSAFQAHLSSSNVDQSATLLRRF) directs the protein to the mitochondrion.

This sequence belongs to the EF-Ts family.

It localises to the mitochondrion. Associates with the EF-Tu.GDP complex and induces the exchange of GDP to GTP. It remains bound to the aminoacyl-tRNA.EF-Tu.GTP complex up to the GTP hydrolysis stage on the ribosome. The chain is Elongation factor Ts, mitochondrial from Oryza sativa subsp. japonica (Rice).